The primary structure comprises 299 residues: Lipoyl synthase (299 aa).

[4Fe-4S] cluster is bound by residues C34, C39, C45, C60, C64, C67, and S273. Positions 46-262 (WNKKHATVMI…KYVAYSKGFL (217 aa)) constitute a Radical SAM core domain.

Belongs to the radical SAM superfamily. Lipoyl synthase family. The cofactor is [4Fe-4S] cluster.

Its subcellular location is the cytoplasm. The enzyme catalyses [[Fe-S] cluster scaffold protein carrying a second [4Fe-4S](2+) cluster] + N(6)-octanoyl-L-lysyl-[protein] + 2 oxidized [2Fe-2S]-[ferredoxin] + 2 S-adenosyl-L-methionine + 4 H(+) = [[Fe-S] cluster scaffold protein] + N(6)-[(R)-dihydrolipoyl]-L-lysyl-[protein] + 4 Fe(3+) + 2 hydrogen sulfide + 2 5'-deoxyadenosine + 2 L-methionine + 2 reduced [2Fe-2S]-[ferredoxin]. It functions in the pathway protein modification; protein lipoylation via endogenous pathway; protein N(6)-(lipoyl)lysine from octanoyl-[acyl-carrier-protein]: step 2/2. Catalyzes the radical-mediated insertion of two sulfur atoms into the C-6 and C-8 positions of the octanoyl moiety bound to the lipoyl domains of lipoate-dependent enzymes, thereby converting the octanoylated domains into lipoylated derivatives. This Ehrlichia canis (strain Jake) protein is Lipoyl synthase.